We begin with the raw amino-acid sequence, 31 residues long: Spectrin beta chain, non-erythrocytic 1 (31 aa).

Spectrin repeat units lie at residues 1–10, 11–19, and 20–31; these read VLLLSQDYGK, YKEVAELTR, and TQILAASYELHK. Residue tyrosine 27 is modified to Phosphotyrosine.

This sequence belongs to the spectrin family. As to quaternary structure, interacts with ANK2. Interacts with CPNE4 (via VWFA domain). Like erythrocyte spectrin, the spectrin-like proteins are capable to form dimers which can further associate to tetramers. Associates with the gamma-tubulin complex in brain, but not in kidney, liver, sperm, or uterus. Interacts with CAMSAP1. Can form heterodimers with SPTAN1.

Its subcellular location is the cytoplasm. It localises to the cytoskeleton. It is found in the myofibril. The protein resides in the sarcomere. The protein localises to the m line. Its subcellular location is the cytosol. It localises to the cell membrane. Fodrin, which seems to be involved in secretion, interacts with calmodulin in a calcium-dependent manner and is thus candidate for the calcium-dependent movement of the cytoskeleton at the membrane. Plays a critical role in central nervous system development and function. The sequence is that of Spectrin beta chain, non-erythrocytic 1 (SPTBN1) from Capra hircus (Goat).